Here is a 446-residue protein sequence, read N- to C-terminus: tRNA-2-methylthio-N(6)-dimethylallyladenosine synthase (446 aa).

Positions 3–124 constitute an MTTase N-terminal domain; the sequence is KKLYIKTYGC…LPELISKVVR (122 aa). Residues C12, C48, C87, C162, C166, and C169 each coordinate [4Fe-4S] cluster. A Radical SAM core domain is found at 148–380; the sequence is YPQGASSFIS…QKELAAQQLA (233 aa). The region spanning 383 to 446 is the TRAM domain; sequence ESCIGSTMKV…LNSLSGEIYR (64 aa).

This sequence belongs to the methylthiotransferase family. MiaB subfamily. In terms of assembly, monomer. It depends on [4Fe-4S] cluster as a cofactor.

The protein localises to the cytoplasm. The enzyme catalyses N(6)-dimethylallyladenosine(37) in tRNA + (sulfur carrier)-SH + AH2 + 2 S-adenosyl-L-methionine = 2-methylsulfanyl-N(6)-dimethylallyladenosine(37) in tRNA + (sulfur carrier)-H + 5'-deoxyadenosine + L-methionine + A + S-adenosyl-L-homocysteine + 2 H(+). Functionally, catalyzes the methylthiolation of N6-(dimethylallyl)adenosine (i(6)A), leading to the formation of 2-methylthio-N6-(dimethylallyl)adenosine (ms(2)i(6)A) at position 37 in tRNAs that read codons beginning with uridine. The sequence is that of tRNA-2-methylthio-N(6)-dimethylallyladenosine synthase from Rickettsia bellii (strain RML369-C).